Reading from the N-terminus, the 688-residue chain is Elongation factor G (688 aa).

The 275-residue stretch at 6–280 (KLFRNFGIMA…AVVDFLPSPI (275 aa)) folds into the tr-type G domain. Residues 15 to 22 (AHIDAGKT), 79 to 83 (DTPGH), and 133 to 136 (NKMD) contribute to the GTP site.

The protein belongs to the TRAFAC class translation factor GTPase superfamily. Classic translation factor GTPase family. EF-G/EF-2 subfamily.

It localises to the cytoplasm. Catalyzes the GTP-dependent ribosomal translocation step during translation elongation. During this step, the ribosome changes from the pre-translocational (PRE) to the post-translocational (POST) state as the newly formed A-site-bound peptidyl-tRNA and P-site-bound deacylated tRNA move to the P and E sites, respectively. Catalyzes the coordinated movement of the two tRNA molecules, the mRNA and conformational changes in the ribosome. The sequence is that of Elongation factor G from Ureaplasma urealyticum serovar 10 (strain ATCC 33699 / Western).